Reading from the N-terminus, the 981-residue chain is uncharacterized protein (981 aa).

Disordered regions lie at residues 65–133 (NIDN…SNNS), 149–463 (SSNS…NKIE), 491–580 (SNNI…DSPL), 592–834 (EQTN…LNQV), and 861–891 (VQND…NDGN). Acidic residues predominate over residues 75–88 (SSDDDDDDDDDDDY). Low complexity-rich tracts occupy residues 89 to 133 (NNNN…SNNS), 149 to 158 (SSNSINNNDN), and 170 to 181 (SAKTTSSLTSSK). A compositionally biased stretch (basic and acidic residues) spans 182 to 195 (RSLDSRNRNRDRSY). Residues 196 to 206 (TRSRSRSRSRS) show a composition bias toward basic residues. The span at 207–227 (YSRGFSSLSRSRSRSRSISSR) shows a compositional bias: low complexity. Over residues 228–269 (SRSRSRSRRSRSRSSRSRSRSRSKSKSKSRRSRSRSRSRRSR) the composition is skewed to basic residues. Residues 270–292 (SRSDSRSRSDSRGRSRSRSDSRK) are compositionally biased toward basic and acidic residues. Basic residues predominate over residues 314-358 (SSKRHQNSRKRNRSYSRSRTRSWSRSRTRSRSRRRYGGRTFRSPR). Positions 359–452 (RSRDDSRDRG…SQSPHNEKNK (94 aa)) are enriched in basic and acidic residues. Residues 491 to 553 (SNNINNNNIK…SHNNTNGNVN (63 aa)) are compositionally biased toward low complexity. Composition is skewed to polar residues over residues 554-576 (GVSK…STDL) and 605-622 (ESNN…SSTE). Residues 623–634 (NENKNRENEKNN) show a composition bias toward basic and acidic residues. 2 stretches are compositionally biased toward low complexity: residues 635–820 (SENS…NNNS) and 867–891 (SSPI…NDGN).

This is an uncharacterized protein from Dictyostelium discoideum (Social amoeba).